The following is an 819-amino-acid chain: Meiotically up-regulated gene 45 protein (819 aa).

The chain crosses the membrane as a helical span at residues 797 to 817 (AMCLLTLLIGIYLILQVVFIY).

Its subcellular location is the membrane. Its function is as follows. Has a role in meiosis. This Schizosaccharomyces pombe (strain 972 / ATCC 24843) (Fission yeast) protein is Meiotically up-regulated gene 45 protein (mug45).